Reading from the N-terminus, the 179-residue chain is MSRIGKLPVSITKGVKVELKDDKVIVSGPKGTLEQKLRPEVTVSVDGNNVVVTRKDDTRPSKEMHGLYRVLINNMVTGVSTGFTKKLELVGVGYKAEIKKDMLVLSLGFSHQIYFKTPAEIKVEVPAPTNISISGSDKELVGQVAAKIRSFRPPEPYQGKGVKYENEVIRRKEGKAAGK.

Belongs to the universal ribosomal protein uL6 family. In terms of assembly, part of the 50S ribosomal subunit.

Functionally, this protein binds to the 23S rRNA, and is important in its secondary structure. It is located near the subunit interface in the base of the L7/L12 stalk, and near the tRNA binding site of the peptidyltransferase center. The sequence is that of Large ribosomal subunit protein uL6 from Chloroherpeton thalassium (strain ATCC 35110 / GB-78).